Here is a 179-residue protein sequence, read N- to C-terminus: Ribosome maturation factor RimM (179 aa).

Positions 95 to 174 (KDEFFYFDIL…QIFCTQDAFL (80 aa)) constitute a PRC barrel domain.

The protein belongs to the RimM family. In terms of assembly, binds ribosomal protein uS19.

It is found in the cytoplasm. Functionally, an accessory protein needed during the final step in the assembly of 30S ribosomal subunit, possibly for assembly of the head region. Essential for efficient processing of 16S rRNA. May be needed both before and after RbfA during the maturation of 16S rRNA. It has affinity for free ribosomal 30S subunits but not for 70S ribosomes. The polypeptide is Ribosome maturation factor RimM (Campylobacter jejuni subsp. jejuni serotype O:6 (strain 81116 / NCTC 11828)).